The sequence spans 412 residues: uncharacterized protein (412 aa).

This sequence belongs to the PQQ oxidoreductase GdhB family. It depends on pyrroloquinoline quinone as a cofactor.

This is an uncharacterized protein from Synechocystis sp. (strain ATCC 27184 / PCC 6803 / Kazusa).